A 361-amino-acid polypeptide reads, in one-letter code: Phospho-N-acetylmuramoyl-pentapeptide-transferase (361 aa).

The next 10 membrane-spanning stretches (helical) occupy residues 21 to 41 (YLTI…LMLG), 69 to 89 (VGTP…SILI), 93 to 113 (WSNI…AIGF), 131 to 151 (SIKF…IILI), 168 to 188 (IILP…IVGS), 200 to 220 (GLAI…AYFS), 240 to 260 (LFII…FNAY), 264 to 284 (IFMG…IAIL), 289 to 309 (ILLF…IIQV), and 338 to 358 (KIIV…LASI).

This sequence belongs to the glycosyltransferase 4 family. MraY subfamily. The cofactor is Mg(2+).

It localises to the cell inner membrane. The enzyme catalyses UDP-N-acetyl-alpha-D-muramoyl-L-alanyl-gamma-D-glutamyl-meso-2,6-diaminopimeloyl-D-alanyl-D-alanine + di-trans,octa-cis-undecaprenyl phosphate = di-trans,octa-cis-undecaprenyl diphospho-N-acetyl-alpha-D-muramoyl-L-alanyl-D-glutamyl-meso-2,6-diaminopimeloyl-D-alanyl-D-alanine + UMP. Its pathway is cell wall biogenesis; peptidoglycan biosynthesis. Functionally, catalyzes the initial step of the lipid cycle reactions in the biosynthesis of the cell wall peptidoglycan: transfers peptidoglycan precursor phospho-MurNAc-pentapeptide from UDP-MurNAc-pentapeptide onto the lipid carrier undecaprenyl phosphate, yielding undecaprenyl-pyrophosphoryl-MurNAc-pentapeptide, known as lipid I. In Vesicomyosocius okutanii subsp. Calyptogena okutanii (strain HA), this protein is Phospho-N-acetylmuramoyl-pentapeptide-transferase.